The primary structure comprises 1325 residues: uncharacterized protein (1325 aa).

A signal peptide spans 1–27 (MHTFTRKVKWPFMFTAIGLTFGIVAVA). The N-palmitoyl cysteine moiety is linked to residue cysteine 28. The S-diacylglycerol cysteine moiety is linked to residue cysteine 28. Disordered regions lie at residues 379 to 402 (RAASSSSEGTIQLKTASDGGGTTQ) and 430 to 464 (NTNANQTGGGGSGGGGGTSTGSSTGSSTETTTGNS). Positions 436-448 (TGGGGSGGGGGTS) are enriched in gly residues. A compositionally biased stretch (low complexity) spans 449–464 (TGSSTGSSTETTTGNS).

This sequence belongs to the MG307/MG309/MG338 family.

The protein resides in the cell membrane. This is an uncharacterized protein from Mycoplasma pneumoniae (strain ATCC 29342 / M129 / Subtype 1) (Mycoplasmoides pneumoniae).